The chain runs to 385 residues: Cytochrome b (385 aa).

Residues 1-27 (MRLLKSHPLLKLVNSYLIDASQPSNIS) lie on the Mitochondrial matrix side of the membrane. An a ubiquinone-binding site is contributed by Y16. The helical transmembrane segment at 28 to 51 (YLWNFGSLLACCLIIQIVTGVTLA) threads the bilayer. Residues 52–74 (MHYSPNVLEAFNSIEHIMRDVNN) are Mitochondrial intermembrane-facing. A helical membrane pass occupies residues 75–102 (GWLVRYLHSNTASAFFFLVYLHIGRGMY). Heme b contacts are provided by H82 and H96. The Mitochondrial matrix segment spans residues 103-110 (YGSYRAPR). Residues 111–135 (TLVWAIGTVILILMMATAFLGYVLP) traverse the membrane as a helical segment. Topologically, residues 136-172 (YGQMSLWGATVITNLISAIPWIGQDIVEFIWGGFSVN) are mitochondrial intermembrane. The chain crosses the membrane as a helical span at residues 173 to 205 (NATLNRFFALHFVLPFILAALVLMHLIALHDTA). Positions 183 and 197 each coordinate heme b. H202 contributes to the a ubiquinone binding site. The Mitochondrial matrix portion of the chain corresponds to 206 to 224 (GSSNPLGVSGNYDRITFAP). A helical membrane pass occupies residues 225-247 (YYLFKDLITIFIFIYVLSSFVFF). The Mitochondrial intermembrane segment spans residues 248–288 (MPNVLGDSENYIMANPMQTPPAIVPEWYLLPFYAILRSIPN). Residues 289-309 (KLLGVIAMFSAILAIMLLPIT) form a helical membrane-spanning segment. Residues 310 to 320 (DLGRSKGLQFR) lie on the Mitochondrial matrix side of the membrane. The chain crosses the membrane as a helical span at residues 321–341 (PLSKFAFWAFVVNFLILMKLG). Residues 342–348 (ACHVESP) lie on the Mitochondrial intermembrane side of the membrane. The chain crosses the membrane as a helical span at residues 349 to 365 (FIELGQFSTIFYFSYFI). Topologically, residues 366–385 (FIVPVLSLIENTLVDLNYLK) are mitochondrial matrix.

Belongs to the cytochrome b family. Component of the ubiquinol-cytochrome c oxidoreductase (cytochrome b-c1 complex, complex III, CIII), a multisubunit enzyme composed of 10 subunits. The complex is composed of 3 respiratory subunits cytochrome b (cob), cytochrome c1 (cyt-1) and Rieske protein (fes-1), 2 core protein subunits pep and ucr-1, and 5 low-molecular weight protein subunits qcr6, qcr7, qcr8, qcr9 and probably NCU16844/qcr10. The complex exists as an obligatory dimer and forms supercomplexes (SCs) in the inner mitochondrial membrane with NADH-ubiquinone oxidoreductase (complex I, CI) and cytochrome c oxidase (complex IV, CIV), resulting in different assemblies (supercomplexes SCI(1)III(2), SCIII(2)IV(1) and SCIII(2)IV(2) as well as higher order I(x)III(y)IV(z) megacomplexes). Heme b serves as cofactor.

Its subcellular location is the mitochondrion inner membrane. The enzyme catalyses a quinol + 2 Fe(III)-[cytochrome c](out) = a quinone + 2 Fe(II)-[cytochrome c](out) + 2 H(+)(out). In terms of biological role, component of the ubiquinol-cytochrome c oxidoreductase, a multisubunit transmembrane complex that is part of the mitochondrial electron transport chain which drives oxidative phosphorylation. The respiratory chain contains 3 multisubunit complexes succinate dehydrogenase (complex II, CII), ubiquinol-cytochrome c oxidoreductase (cytochrome b-c1 complex, complex III, CIII) and cytochrome c oxidase (complex IV, CIV), that cooperate to transfer electrons derived from NADH and succinate to molecular oxygen, creating an electrochemical gradient over the inner membrane that drives transmembrane transport and the ATP synthase. The cytochrome b-c1 complex catalyzes electron transfer from ubiquinol to cytochrome c, linking this redox reaction to translocation of protons across the mitochondrial inner membrane, with protons being carried across the membrane as hydrogens on the quinol. In the process called Q cycle, 2 protons are consumed from the matrix, 4 protons are released into the intermembrane space and 2 electrons are passed to cytochrome c. Cytochrome b is a catalytic core subunit containing 2 b-type hemes BL and BH topographically segregated in the quinone reduction (Qi) and quinol oxidation (Q0) sites on opposite sides of the membrane. The sequence is that of Cytochrome b (cob) from Neurospora crassa (strain ATCC 24698 / 74-OR23-1A / CBS 708.71 / DSM 1257 / FGSC 987).